A 276-amino-acid polypeptide reads, in one-letter code: Replication protein A 32 kDa subunit-A (276 aa).

A compositionally biased stretch (gly residues) spans 19–31; that stretch reads GGGGYMQSPGGFG. The tract at residues 19-47 is disordered; that stretch reads GGGGYMQSPGGFGSPAPTQGEKKSRSRSQ. Positions 77–151 form a DNA-binding region, OB; sequence VTIVGIVRHA…KSVVAFKIAP (75 aa).

It belongs to the replication factor A protein 2 family. In terms of assembly, component of the replication protein A complex (RPA/RP-A), a heterotrimeric complex composed of RPA1, RPA2 and RPA3. Post-translationally, differentially phosphorylated throughout the cell cycle, becoming phosphorylated at the G1-S transition and dephosphorylated in late mitosis. Phosphorylation increases upon replication fork stalling.

It localises to the nucleus. The protein localises to the PML body. Its function is as follows. As part of the heterotrimeric replication protein A complex (RPA/RP-A), binds and stabilizes single-stranded DNA intermediates, that form during DNA replication or upon DNA stress. It prevents their reannealing and in parallel, recruits and activates different proteins and complexes involved in DNA metabolism. Thereby, it plays an essential role both in DNA replication and the cellular response to DNA damage. The chain is Replication protein A 32 kDa subunit-A (rpa2-a) from Xenopus laevis (African clawed frog).